The primary structure comprises 471 residues: 3-isopropylmalate dehydratase large subunit (471 aa).

Positions 347, 407, and 410 each coordinate [4Fe-4S] cluster.

The protein belongs to the aconitase/IPM isomerase family. LeuC type 1 subfamily. In terms of assembly, heterodimer of LeuC and LeuD. [4Fe-4S] cluster serves as cofactor.

It carries out the reaction (2R,3S)-3-isopropylmalate = (2S)-2-isopropylmalate. The protein operates within amino-acid biosynthesis; L-leucine biosynthesis; L-leucine from 3-methyl-2-oxobutanoate: step 2/4. Catalyzes the isomerization between 2-isopropylmalate and 3-isopropylmalate, via the formation of 2-isopropylmaleate. This Edwardsiella ictaluri (strain 93-146) protein is 3-isopropylmalate dehydratase large subunit.